The primary structure comprises 306 residues: Pantothenate kinase (306 aa).

An ATP-binding site is contributed by 91–98; sequence GSVAVGKS.

This sequence belongs to the prokaryotic pantothenate kinase family.

The protein resides in the cytoplasm. It carries out the reaction (R)-pantothenate + ATP = (R)-4'-phosphopantothenate + ADP + H(+). It functions in the pathway cofactor biosynthesis; coenzyme A biosynthesis; CoA from (R)-pantothenate: step 1/5. This chain is Pantothenate kinase (coaA), found in Streptococcus pneumoniae serotype 4 (strain ATCC BAA-334 / TIGR4).